The chain runs to 80 residues: UPF0291 protein EF_1580 (80 aa).

A disordered region spans residues 60 to 80; sequence TDVTPEKLKKIQREKGLHNRK. Residues 63 to 80 show a composition bias toward basic and acidic residues; that stretch reads TPEKLKKIQREKGLHNRK.

Belongs to the UPF0291 family.

Its subcellular location is the cytoplasm. This chain is UPF0291 protein EF_1580, found in Enterococcus faecalis (strain ATCC 700802 / V583).